A 336-amino-acid chain; its full sequence is Eukaryotic translation initiation factor 3 subunit I (336 aa).

WD repeat units lie at residues 8–47 (GHERSLTQIKFNRDGDLLFSVSKDKIVCAWWTANGERLGT), 50–91 (GHLG…KVWE), 146–185 (CNESKATVAGWSYLGKYIIAGHEDGSVSQYDAKTGDQLEN), 190–229 (EFDHQINDIQFSADRTYFITASKDKSAKLISSRNLAILKT), and 287–326 (GHFGPLNTVGVHPNGTAYASGGEDGYVRVHHFDKPYFDFM).

This sequence belongs to the eIF-3 subunit I family. Component of the eukaryotic translation initiation factor 3 (eIF-3) complex.

It is found in the cytoplasm. Component of the eukaryotic translation initiation factor 3 (eIF-3) complex, which is involved in protein synthesis of a specialized repertoire of mRNAs and, together with other initiation factors, stimulates binding of mRNA and methionyl-tRNAi to the 40S ribosome. The eIF-3 complex specifically targets and initiates translation of a subset of mRNAs involved in cell proliferation. The chain is Eukaryotic translation initiation factor 3 subunit I (tif34) from Aspergillus terreus (strain NIH 2624 / FGSC A1156).